Consider the following 335-residue polypeptide: L-threo-3-deoxy-hexylosonate aldolase (335 aa).

50–51 (SN) serves as a coordination point for substrate. Lys175 acts as the Schiff-base intermediate with substrate in catalysis.

The protein belongs to the DapA family.

It carries out the reaction 2-dehydro-3-deoxy-L-galactonate = L-glyceraldehyde + pyruvate. It functions in the pathway carbohydrate acid metabolism. Its function is as follows. Mediates the conversion of 2-dehydro-3-deoxy-L-galactonate to pyruvate and L-glyceraldehyde in D-galacturonate catabolic process. The sequence is that of L-threo-3-deoxy-hexylosonate aldolase (gaaC) from Aspergillus niger.